The chain runs to 196 residues: Putative 3-methyladenine DNA glycosylase (196 aa).

It belongs to the DNA glycosylase MPG family.

The sequence is that of Putative 3-methyladenine DNA glycosylase (yxlJ) from Bacillus subtilis (strain 168).